The primary structure comprises 485 residues: Ribulose bisphosphate carboxylase large chain (485 aa).

2 residues coordinate substrate: Asn-124 and Thr-174. The active-site Proton acceptor is Lys-176. Lys-178 is a substrate binding site. Residues Lys-202, Asp-204, and Glu-205 each coordinate Mg(2+). Lys-202 bears the N6-carboxylysine mark. His-294 acts as the Proton acceptor in catalysis. Residues Arg-295, His-327, and Ser-379 each coordinate substrate.

Belongs to the RuBisCO large chain family. Type I subfamily. As to quaternary structure, heterohexadecamer of 8 large chains and 8 small chains. Requires Mg(2+) as cofactor.

The catalysed reaction is 2 (2R)-3-phosphoglycerate + 2 H(+) = D-ribulose 1,5-bisphosphate + CO2 + H2O. It catalyses the reaction D-ribulose 1,5-bisphosphate + O2 = 2-phosphoglycolate + (2R)-3-phosphoglycerate + 2 H(+). In terms of biological role, ruBisCO catalyzes two reactions: the carboxylation of D-ribulose 1,5-bisphosphate, the primary event in carbon dioxide fixation, as well as the oxidative fragmentation of the pentose substrate in the photorespiration process. Both reactions occur simultaneously and in competition at the same active site. The chain is Ribulose bisphosphate carboxylase large chain from Rhodopseudomonas palustris (strain BisB18).